A 194-amino-acid polypeptide reads, in one-letter code: UPF0301 protein BPEN_258 (194 aa).

It belongs to the UPF0301 (AlgH) family.

This chain is UPF0301 protein BPEN_258, found in Blochmanniella pennsylvanica (strain BPEN).